Here is a 273-residue protein sequence, read N- to C-terminus: Formamidopyrimidine-DNA glycosylase (273 aa).

The active-site Schiff-base intermediate with DNA is Pro-2. Glu-3 (proton donor) is an active-site residue. Lys-59 functions as the Proton donor; for beta-elimination activity in the catalytic mechanism. DNA contacts are provided by His-92 and Arg-111. The segment at 239 to 273 (KVYGKTGEPCVICGTPIEKIKLNGRGTHFCPHCQK) adopts an FPG-type zinc-finger fold. Arg-263 (proton donor; for delta-elimination activity) is an active-site residue.

Belongs to the FPG family. As to quaternary structure, monomer. Zn(2+) is required as a cofactor.

It carries out the reaction Hydrolysis of DNA containing ring-opened 7-methylguanine residues, releasing 2,6-diamino-4-hydroxy-5-(N-methyl)formamidopyrimidine.. The enzyme catalyses 2'-deoxyribonucleotide-(2'-deoxyribose 5'-phosphate)-2'-deoxyribonucleotide-DNA = a 3'-end 2'-deoxyribonucleotide-(2,3-dehydro-2,3-deoxyribose 5'-phosphate)-DNA + a 5'-end 5'-phospho-2'-deoxyribonucleoside-DNA + H(+). Involved in base excision repair of DNA damaged by oxidation or by mutagenic agents. Acts as a DNA glycosylase that recognizes and removes damaged bases. Has a preference for oxidized purines, such as 7,8-dihydro-8-oxoguanine (8-oxoG). Has AP (apurinic/apyrimidinic) lyase activity and introduces nicks in the DNA strand. Cleaves the DNA backbone by beta-delta elimination to generate a single-strand break at the site of the removed base with both 3'- and 5'-phosphates. The chain is Formamidopyrimidine-DNA glycosylase from Listeria innocua serovar 6a (strain ATCC BAA-680 / CLIP 11262).